The primary structure comprises 172 residues: Bifunctional protein PyrR (172 aa).

A PRPP-binding motif is present at residues 93 to 105; the sequence is VILIDDVLYTGRT.

The protein belongs to the purine/pyrimidine phosphoribosyltransferase family. PyrR subfamily. In terms of assembly, homodimer and homohexamer; in equilibrium.

The catalysed reaction is UMP + diphosphate = 5-phospho-alpha-D-ribose 1-diphosphate + uracil. Functionally, regulates transcriptional attenuation of the pyrimidine nucleotide (pyr) operon by binding in a uridine-dependent manner to specific sites on pyr mRNA. This disrupts an antiterminator hairpin in the RNA and favors formation of a downstream transcription terminator, leading to a reduced expression of downstream genes. Its function is as follows. Also displays a weak uracil phosphoribosyltransferase activity which is not physiologically significant. This is Bifunctional protein PyrR from Streptococcus sanguinis (strain SK36).